Consider the following 529-residue polypeptide: Bifunctional purine biosynthesis protein PurH (529 aa).

One can recognise an MGS-like domain in the interval 1–148; it reads MQQRRPIRRA…KNHKDVAIVV (148 aa).

It belongs to the PurH family.

It catalyses the reaction (6R)-10-formyltetrahydrofolate + 5-amino-1-(5-phospho-beta-D-ribosyl)imidazole-4-carboxamide = 5-formamido-1-(5-phospho-D-ribosyl)imidazole-4-carboxamide + (6S)-5,6,7,8-tetrahydrofolate. The enzyme catalyses IMP + H2O = 5-formamido-1-(5-phospho-D-ribosyl)imidazole-4-carboxamide. The protein operates within purine metabolism; IMP biosynthesis via de novo pathway; 5-formamido-1-(5-phospho-D-ribosyl)imidazole-4-carboxamide from 5-amino-1-(5-phospho-D-ribosyl)imidazole-4-carboxamide (10-formyl THF route): step 1/1. It functions in the pathway purine metabolism; IMP biosynthesis via de novo pathway; IMP from 5-formamido-1-(5-phospho-D-ribosyl)imidazole-4-carboxamide: step 1/1. In Yersinia pseudotuberculosis serotype IB (strain PB1/+), this protein is Bifunctional purine biosynthesis protein PurH.